Reading from the N-terminus, the 362-residue chain is Histidinol-phosphate aminotransferase (362 aa).

Residue Lys-218 is modified to N6-(pyridoxal phosphate)lysine.

The protein belongs to the class-II pyridoxal-phosphate-dependent aminotransferase family. Histidinol-phosphate aminotransferase subfamily. In terms of assembly, homodimer. Requires pyridoxal 5'-phosphate as cofactor.

The enzyme catalyses L-histidinol phosphate + 2-oxoglutarate = 3-(imidazol-4-yl)-2-oxopropyl phosphate + L-glutamate. The protein operates within amino-acid biosynthesis; L-histidine biosynthesis; L-histidine from 5-phospho-alpha-D-ribose 1-diphosphate: step 7/9. This chain is Histidinol-phosphate aminotransferase, found in Xanthomonas campestris pv. campestris (strain ATCC 33913 / DSM 3586 / NCPPB 528 / LMG 568 / P 25).